A 515-amino-acid polypeptide reads, in one-letter code: UBP3-associated protein BRE5 (515 aa).

An NTF2 domain is found at isoleucine 8–phenylalanine 140. The span at glutamine 157–alanine 166 shows a compositional bias: low complexity. 2 disordered regions span residues glutamine 157–serine 410 and lysine 485–aspartate 515. Basic and acidic residues predominate over residues glutamate 168–lysine 201. The residue at position 187 (serine 187) is a Phosphoserine. A compositionally biased stretch (polar residues) spans aspartate 202–glutamate 213. 2 stretches are compositionally biased toward basic and acidic residues: residues leucine 262–serine 282 and glutamate 299–proline 319. The residue at position 282 (serine 282) is a Phosphoserine. Polar residues predominate over residues serine 330–proline 341. Threonine 336 bears the Phosphothreonine mark. A Phosphoserine modification is found at serine 340. The segment covering isoleucine 374–asparagine 396 has biased composition (basic and acidic residues). Phosphoserine is present on serine 398. The RRM domain occupies tyrosine 418 to asparagine 494. The segment covering lysine 489 to threonine 503 has biased composition (polar residues). The span at arginine 504–aspartate 515 shows a compositional bias: basic residues.

In terms of assembly, heterotetramer with UBP3; contains two molecules of BRE5 and two molecules of UBP3. Forms a complex composed of CDC48, DOA1, deubiquitinase UBP3 and probably BRE5. Within the complex, interacts (via C-terminus) with CDC48; the interaction is direct and UBP3-independent.

Functionally, has a role in de-ubiquitination. In conjunction with UBP3, cleaves ubiquitin, leading to the subsequent mono-ubiquitination of sec23. The protein is UBP3-associated protein BRE5 (BRE5) of Saccharomyces cerevisiae (strain ATCC 204508 / S288c) (Baker's yeast).